A 668-amino-acid chain; its full sequence is Fructose-1,6-bisphosphatase class 3 (668 aa).

It belongs to the FBPase class 3 family. Mn(2+) is required as a cofactor.

The enzyme catalyses beta-D-fructose 1,6-bisphosphate + H2O = beta-D-fructose 6-phosphate + phosphate. The protein operates within carbohydrate biosynthesis; gluconeogenesis. The chain is Fructose-1,6-bisphosphatase class 3 from Clostridium botulinum (strain Loch Maree / Type A3).